Reading from the N-terminus, the 392-residue chain is Imidazolonepropionase (392 aa).

Fe(3+)-binding residues include His69 and His71. His69 and His71 together coordinate Zn(2+). The 4-imidazolone-5-propanoate site is built by Arg78, Tyr136, and His163. Tyr136 contacts N-formimidoyl-L-glutamate. His226 contacts Fe(3+). A Zn(2+)-binding site is contributed by His226. Residue Gln229 participates in 4-imidazolone-5-propanoate binding. Asp302 serves as a coordination point for Fe(3+). Residue Asp302 participates in Zn(2+) binding. The N-formimidoyl-L-glutamate site is built by Asn304 and Gly306. Residue Ser307 participates in 4-imidazolone-5-propanoate binding.

Belongs to the metallo-dependent hydrolases superfamily. HutI family. Zn(2+) serves as cofactor. Requires Fe(3+) as cofactor.

The protein resides in the cytoplasm. It catalyses the reaction 4-imidazolone-5-propanoate + H2O = N-formimidoyl-L-glutamate. It functions in the pathway amino-acid degradation; L-histidine degradation into L-glutamate; N-formimidoyl-L-glutamate from L-histidine: step 3/3. Functionally, catalyzes the hydrolytic cleavage of the carbon-nitrogen bond in imidazolone-5-propanoate to yield N-formimidoyl-L-glutamate. It is the third step in the universal histidine degradation pathway. This Salinispora arenicola (strain CNS-205) protein is Imidazolonepropionase.